A 411-amino-acid chain; its full sequence is Na(+)-translocating NADH-quinone reductase subunit F (411 aa).

Residues 5–25 (VILALGIAAFTVIVLVLVAII) traverse the membrane as a helical segment. The 2Fe-2S ferredoxin-type domain occupies 36–130 (GDITIGINDD…NMEVELPEEI (95 aa)). [2Fe-2S] cluster is bound by residues Cys73, Cys79, Cys82, and Cys114. The FAD-binding FR-type domain maps to 133–273 (VKKWECTVIS…SGPFGEFFAK (141 aa)).

The protein belongs to the NqrF family. Composed of six subunits; NqrA, NqrB, NqrC, NqrD, NqrE and NqrF. [2Fe-2S] cluster serves as cofactor. FAD is required as a cofactor.

It is found in the cell inner membrane. The enzyme catalyses a ubiquinone + n Na(+)(in) + NADH + H(+) = a ubiquinol + n Na(+)(out) + NAD(+). NQR complex catalyzes the reduction of ubiquinone-1 to ubiquinol by two successive reactions, coupled with the transport of Na(+) ions from the cytoplasm to the periplasm. The first step is catalyzed by NqrF, which accepts electrons from NADH and reduces ubiquinone-1 to ubisemiquinone by a one-electron transfer pathway. The protein is Na(+)-translocating NADH-quinone reductase subunit F of Haemophilus influenzae (strain PittEE).